Consider the following 381-residue polypeptide: 5-amino-6-(D-ribitylamino)uracil--L-tyrosine 4-hydroxyphenyl transferase (381 aa).

The Radical SAM core domain maps to Val59–Asn306. [4Fe-4S] cluster contacts are provided by Cys73, Cys77, and Cys80.

This sequence belongs to the radical SAM superfamily. CofH family. Consists of two subunits, CofG and CofH. The cofactor is [4Fe-4S] cluster.

The catalysed reaction is 5-amino-6-(D-ribitylamino)uracil + L-tyrosine + S-adenosyl-L-methionine = 5-amino-5-(4-hydroxybenzyl)-6-(D-ribitylimino)-5,6-dihydrouracil + 2-iminoacetate + 5'-deoxyadenosine + L-methionine + H(+). It participates in cofactor biosynthesis; coenzyme F0 biosynthesis. Its function is as follows. Catalyzes the radical-mediated synthesis of 5-amino-5-(4-hydroxybenzyl)-6-(D-ribitylimino)-5,6-dihydrouracil from 5-amino-6-(D-ribitylamino)uracil and L-tyrosine. The sequence is that of 5-amino-6-(D-ribitylamino)uracil--L-tyrosine 4-hydroxyphenyl transferase from Cyanothece sp. (strain PCC 7425 / ATCC 29141).